The primary structure comprises 170 residues: 4-hydroxyphenylacetate 3-monooxygenase reductase component (170 aa).

The protein belongs to the non-flavoprotein flavin reductase family. HpaC subfamily. In terms of assembly, monomer. HPA 3-hydroxylase consists of a reductase component HpaC and an oxygenase component HpaB. Some form of interactions between the reductase and the oxygenase facilitate the transfer of FADH(-) to the oxygenase in P.aeruginosa, although interactions are not required in other species.

It catalyses the reaction FADH2 + NAD(+) = FAD + NADH + 2 H(+). Its pathway is aromatic compound metabolism; 4-hydroxyphenylacetate degradation; pyruvate and succinate semialdehyde from 4-hydroxyphenylacetate: step 1/7. With respect to regulation, the rate of FAD reduction is independent of the presence of HPA, demonstrating that, in contrast to HPAH from A.baumannii, the activity of the HPAH reductase is not allosterically regulated by the substrate. In terms of biological role, reductase component of the 4-hydroxyphenylacetate (HPA) 3-hydroxylase. Catalyzes the reduction of FAD by NADH. The reduced flavin is then transferred to the oxygenase component HpaB. Is also able to reduce FMN and riboflavin, but preferentially binds FAD. Has no activity with NADPH as the reductant. In Pseudomonas aeruginosa (strain ATCC 15692 / DSM 22644 / CIP 104116 / JCM 14847 / LMG 12228 / 1C / PRS 101 / PAO1), this protein is 4-hydroxyphenylacetate 3-monooxygenase reductase component.